The chain runs to 453 residues: Bifunctional protein GlmU (453 aa).

Residues 1-226 (MTLDVVILAA…ALEVEGVNNR (226 aa)) form a pyrophosphorylase region. Residues 8 to 11 (LAAG), lysine 22, glutamine 73, 78 to 79 (GT), 99 to 101 (YGD), glycine 136, glutamate 151, asparagine 166, and asparagine 224 each bind UDP-N-acetyl-alpha-D-glucosamine. A Mg(2+)-binding site is contributed by aspartate 101. Asparagine 224 contributes to the Mg(2+) binding site. A linker region spans residues 227–247 (SQMAALERAYQRDRAERLLTE). The tract at residues 248–453 (GVALADPARF…AGWKRPRKSS (206 aa)) is N-acetyltransferase. Arginine 330 and lysine 348 together coordinate UDP-N-acetyl-alpha-D-glucosamine. Residue histidine 360 is the Proton acceptor of the active site. UDP-N-acetyl-alpha-D-glucosamine-binding residues include tyrosine 363 and asparagine 374. Acetyl-CoA is bound by residues alanine 377, 383–384 (NY), serine 402, alanine 420, and arginine 437.

It in the N-terminal section; belongs to the N-acetylglucosamine-1-phosphate uridyltransferase family. In the C-terminal section; belongs to the transferase hexapeptide repeat family. Homotrimer. Mg(2+) is required as a cofactor.

The protein localises to the cytoplasm. It catalyses the reaction alpha-D-glucosamine 1-phosphate + acetyl-CoA = N-acetyl-alpha-D-glucosamine 1-phosphate + CoA + H(+). It carries out the reaction N-acetyl-alpha-D-glucosamine 1-phosphate + UTP + H(+) = UDP-N-acetyl-alpha-D-glucosamine + diphosphate. Its pathway is nucleotide-sugar biosynthesis; UDP-N-acetyl-alpha-D-glucosamine biosynthesis; N-acetyl-alpha-D-glucosamine 1-phosphate from alpha-D-glucosamine 6-phosphate (route II): step 2/2. It participates in nucleotide-sugar biosynthesis; UDP-N-acetyl-alpha-D-glucosamine biosynthesis; UDP-N-acetyl-alpha-D-glucosamine from N-acetyl-alpha-D-glucosamine 1-phosphate: step 1/1. It functions in the pathway bacterial outer membrane biogenesis; LPS lipid A biosynthesis. Its function is as follows. Catalyzes the last two sequential reactions in the de novo biosynthetic pathway for UDP-N-acetylglucosamine (UDP-GlcNAc). The C-terminal domain catalyzes the transfer of acetyl group from acetyl coenzyme A to glucosamine-1-phosphate (GlcN-1-P) to produce N-acetylglucosamine-1-phosphate (GlcNAc-1-P), which is converted into UDP-GlcNAc by the transfer of uridine 5-monophosphate (from uridine 5-triphosphate), a reaction catalyzed by the N-terminal domain. This is Bifunctional protein GlmU from Chromohalobacter salexigens (strain ATCC BAA-138 / DSM 3043 / CIP 106854 / NCIMB 13768 / 1H11).